A 338-amino-acid chain; its full sequence is 1-aminocyclopropane-1-carboxylate deaminase (338 aa).

Residue Lys-51 is modified to N6-(pyridoxal phosphate)lysine. Residue Ser-78 is the Nucleophile of the active site.

Belongs to the ACC deaminase/D-cysteine desulfhydrase family. In terms of assembly, homotrimer. Pyridoxal 5'-phosphate serves as cofactor.

The enzyme catalyses 1-aminocyclopropane-1-carboxylate + H2O = 2-oxobutanoate + NH4(+). Its function is as follows. Catalyzes a cyclopropane ring-opening reaction, the irreversible conversion of 1-aminocyclopropane-1-carboxylate (ACC) to ammonia and alpha-ketobutyrate. Allows growth on ACC as a nitrogen source. The polypeptide is 1-aminocyclopropane-1-carboxylate deaminase (Pseudomonas sp. (strain ACP)).